A 147-amino-acid polypeptide reads, in one-letter code: MSNFTAEDKAAITSLWAKVNVEDAGGETLGRLLVVYPWTQRFFDSFGSLSSPSAIMGNPKVKAHGAKVLTSLGEAIKNLDDLKGTFGQLSELHCDKLHVDPENFRLLGNVLVTVLAIHHGKEFTPEVQASWQKMVAGVASALGSRYH.

One can recognise a Globin domain in the interval 3-147; that stretch reads NFTAEDKAAI…VASALGSRYH (145 aa). Phosphothreonine is present on Thr13. A phosphoserine mark is found at Ser45, Ser51, and Ser53. At Lys60 the chain carries N6-acetyllysine. His64 is a binding site for heme b. N6-acetyllysine is present on Lys83. His93 is a binding site for heme b. Cys94 carries the S-nitrosocysteine modification. Phosphoserine occurs at positions 140 and 144.

This sequence belongs to the globin family. In terms of assembly, heterotetramer of two alpha chains and two gamma chains in fetal hemoglobin (Hb F). As to expression, red blood cells.

Gamma chains make up the fetal hemoglobin F, in combination with alpha chains. The polypeptide is Hemoglobin subunit gamma-2 (HBG2) (Cebus albifrons (White-fronted capuchin)).